A 439-amino-acid chain; its full sequence is ATP-dependent protease ATPase subunit HslU (439 aa).

ATP-binding positions include Ile-17, 59 to 64 (GVGKTE), Asp-251, Glu-317, and Arg-389.

Belongs to the ClpX chaperone family. HslU subfamily. A double ring-shaped homohexamer of HslV is capped on each side by a ring-shaped HslU homohexamer. The assembly of the HslU/HslV complex is dependent on binding of ATP.

It localises to the cytoplasm. In terms of biological role, ATPase subunit of a proteasome-like degradation complex; this subunit has chaperone activity. The binding of ATP and its subsequent hydrolysis by HslU are essential for unfolding of protein substrates subsequently hydrolyzed by HslV. HslU recognizes the N-terminal part of its protein substrates and unfolds these before they are guided to HslV for hydrolysis. In Campylobacter jejuni subsp. jejuni serotype O:23/36 (strain 81-176), this protein is ATP-dependent protease ATPase subunit HslU.